Consider the following 122-residue polypeptide: Large ribosomal subunit protein uL14 (122 aa).

It belongs to the universal ribosomal protein uL14 family. Part of the 50S ribosomal subunit. Forms a cluster with proteins L3 and L19. In the 70S ribosome, L14 and L19 interact and together make contacts with the 16S rRNA in bridges B5 and B8.

Binds to 23S rRNA. Forms part of two intersubunit bridges in the 70S ribosome. The protein is Large ribosomal subunit protein uL14 of Chlorobium phaeobacteroides (strain DSM 266 / SMG 266 / 2430).